The sequence spans 84 residues: FMRFamide-like neuropeptides 26 (84 aa).

The N-terminal stretch at 1–19 (MKVMFMLALLFSSLVATSA) is a signal peptide. The propeptide occupies 20-48 (FRLPFQFFGANEDFNSGLTKRNYYESKPY). Phenylalanine 61 and phenylalanine 82 each carry phenylalanine amide.

It belongs to the FARP (FMRFamide related peptide) family. Each flp gene is expressed in a distinct set of neurons.

It is found in the secreted. FMRFamides and FMRFamide-like peptides are neuropeptides. This is FMRFamide-like neuropeptides 26 from Caenorhabditis elegans.